We begin with the raw amino-acid sequence, 349 residues long: Terpene synthase 2 (349 aa).

A DDxx(x)D/E motif motif is present at residues 84–89 (DDLFDG). Positions 229 to 237 (NDCVSYEKE) match the NDxxSxxxD/E motif motif.

The protein belongs to the terpene synthase family.

The enzyme catalyses (2E,6E)-farnesyl diphosphate = (3S)-(+)-asterisca-2(9),6-diene + diphosphate. It carries out the reaction (2E)-geranyl diphosphate = (Z)-beta-ocimene + diphosphate. It catalyses the reaction (2E)-geranyl diphosphate + H2O = linalool + diphosphate. Functionally, terpene synthase that converts its substrate farnesyl diphosphate (FPP) into the sesquiterpene (3S)-(+)-asterisca-2(9),6-diene. Is also able to convert geranyl diphosphate (GPP) into a mixture of monoterpenes including (Z)-beta-ocimene, allo-ocimene and linalool. The sequence is that of Terpene synthase 2 from Dictyostelium discoideum (Social amoeba).